A 462-amino-acid polypeptide reads, in one-letter code: Glutamate--tRNA ligase 1 (462 aa).

The 'HIGH' region signature appears at 8-18 (PSPTGYLHIGG). The short motif at 236-240 (KLSKR) is the 'KMSKS' region element. K239 is an ATP binding site.

This sequence belongs to the class-I aminoacyl-tRNA synthetase family. Glutamate--tRNA ligase type 1 subfamily. As to quaternary structure, monomer.

It is found in the cytoplasm. It carries out the reaction tRNA(Glu) + L-glutamate + ATP = L-glutamyl-tRNA(Glu) + AMP + diphosphate. Its function is as follows. Catalyzes the attachment of glutamate to tRNA(Glu) in a two-step reaction: glutamate is first activated by ATP to form Glu-AMP and then transferred to the acceptor end of tRNA(Glu). The polypeptide is Glutamate--tRNA ligase 1 (Sulfurovum sp. (strain NBC37-1)).